Here is an 89-residue protein sequence, read N- to C-terminus: uncharacterized protein (89 aa).

Residues F39–V61 form a helical membrane-spanning segment.

The protein resides in the membrane. This is an uncharacterized protein from Saccharomyces cerevisiae (strain ATCC 204508 / S288c) (Baker's yeast).